We begin with the raw amino-acid sequence, 645 residues long: Threonine--tRNA ligase (645 aa).

The TGS domain occupies 1–63 (MEQINIQFPD…ETDGSIGIVT (63 aa)). The catalytic stretch occupies residues 242 to 540 (DHRKIGKELE…LTEETKGAFP (299 aa)). 3 residues coordinate Zn(2+): Cys336, His387, and His517.

This sequence belongs to the class-II aminoacyl-tRNA synthetase family. Homodimer. The cofactor is Zn(2+).

It is found in the cytoplasm. It catalyses the reaction tRNA(Thr) + L-threonine + ATP = L-threonyl-tRNA(Thr) + AMP + diphosphate + H(+). In terms of biological role, catalyzes the attachment of threonine to tRNA(Thr) in a two-step reaction: L-threonine is first activated by ATP to form Thr-AMP and then transferred to the acceptor end of tRNA(Thr). Also edits incorrectly charged L-seryl-tRNA(Thr). The polypeptide is Threonine--tRNA ligase (Staphylococcus aureus (strain Mu3 / ATCC 700698)).